Here is a 523-residue protein sequence, read N- to C-terminus: MELTLWTYEGPPHVGAMRIASSMKDIHYVLHAPQGDTYADLLFTMIERRGQRPPVTYTTFQARDLGGDTAELVKKNIKEAVERFKPKTLLVGESCTAELIQDQPGALAKGMGFDMPIVNLELPAYSKKENWGASETFYQLTRTLLKDKVSFSDKISPFRWKELGRRPKVNILGPSLLGFRCRDDVIEIQRILSEQGIDTNVVAPLGASPDDIERLIDAEINICLYQEIAEASCEWLKRNFGMEYTNTIPIGIKNTIEFINEVHEKLDLPLTNKEELENKSKLPWYSKSVDSNYLTGKRVFIFGDGTHAIAAAKIAKEELGFEVVGLGTYSREMARQVRATAKDLNVEALITNNYLEVEDAMKKAAPELVLGTQMERHSAKRLGIPCSVISTPMHVQDVPARYSPQMGWEGANVIFDDWVHPLMMGLEEHLIDMFKHDFEFVDGHQSHLGHTATNKNNILNSDEKKEKNSKEEIIWTESGRAELTKVPFFVRGKVKTNTEKYAILRGIPEISDETLYDAKAYFS.

Aspartate 36 contributes to the [4Fe-4S] cluster binding site. The Proton donor role is filled by aspartate 290. 425–426 is a binding site for substrate; sequence GL.

It belongs to the ChlB/BchB/BchZ family. In terms of assembly, protochlorophyllide reductase is composed of three subunits; ChlL, ChlN and ChlB. Forms a heterotetramer of two ChlB and two ChlN subunits. It depends on [4Fe-4S] cluster as a cofactor.

The catalysed reaction is chlorophyllide a + oxidized 2[4Fe-4S]-[ferredoxin] + 2 ADP + 2 phosphate = protochlorophyllide a + reduced 2[4Fe-4S]-[ferredoxin] + 2 ATP + 2 H2O. The protein operates within porphyrin-containing compound metabolism; chlorophyll biosynthesis (light-independent). Component of the dark-operative protochlorophyllide reductase (DPOR) that uses Mg-ATP and reduced ferredoxin to reduce ring D of protochlorophyllide (Pchlide) to form chlorophyllide a (Chlide). This reaction is light-independent. The NB-protein (ChlN-ChlB) is the catalytic component of the complex. This chain is Light-independent protochlorophyllide reductase subunit B, found in Prochlorococcus marinus (strain MIT 9301).